A 264-amino-acid chain; its full sequence is Diphthine synthase (264 aa).

S-adenosyl-L-methionine-binding positions include L9, D84, V87, 112-113 (SI), L164, A207, and H232.

The protein belongs to the diphthine synthase family. Homodimer.

The enzyme catalyses 2-[(3S)-amino-3-carboxypropyl]-L-histidyl-[translation elongation factor 2] + 3 S-adenosyl-L-methionine = diphthine-[translation elongation factor 2] + 3 S-adenosyl-L-homocysteine + 3 H(+). The protein operates within protein modification; peptidyl-diphthamide biosynthesis. In terms of biological role, S-adenosyl-L-methionine-dependent methyltransferase that catalyzes the trimethylation of the amino group of the modified target histidine residue in translation elongation factor 2 (EF-2), to form an intermediate called diphthine. The three successive methylation reactions represent the second step of diphthamide biosynthesis. The polypeptide is Diphthine synthase (Methanothermobacter thermautotrophicus (strain ATCC 29096 / DSM 1053 / JCM 10044 / NBRC 100330 / Delta H) (Methanobacterium thermoautotrophicum)).